Reading from the N-terminus, the 104-residue chain is Protein enhancer of rudimentary (104 aa).

A Phosphothreonine; by CK2 modification is found at T18. S24 is modified (phosphoserine; by CK2).

It belongs to the E(R) family.

Its function is as follows. Acts as an enhancer of the rudimentary gene. Has a role in pyrimidine biosynthesis and the cell cycle. The chain is Protein enhancer of rudimentary (e(r)) from Drosophila virilis (Fruit fly).